A 195-amino-acid polypeptide reads, in one-letter code: Small ribosomal subunit protein eS1 (195 aa).

Belongs to the eukaryotic ribosomal protein eS1 family.

This chain is Small ribosomal subunit protein eS1, found in Methanothermobacter thermautotrophicus (strain ATCC 29096 / DSM 1053 / JCM 10044 / NBRC 100330 / Delta H) (Methanobacterium thermoautotrophicum).